The chain runs to 62 residues: Prokaryotic ubiquitin-like protein Pup 2 (62 aa).

The interval Met1–Thr34 is disordered. The tract at residues Pro21–Tyr56 is ARC ATPase binding. Residue Glu62 forms an Isoglutamyl lysine isopeptide (Glu-Lys) (interchain with K-? in acceptor proteins) linkage.

Belongs to the prokaryotic ubiquitin-like protein family. Strongly interacts with the proteasome-associated ATPase ARC through a hydrophobic interface; the interacting region of Pup lies in its C-terminal half. There is one Pup binding site per ARC hexamer ring.

Its pathway is protein degradation; proteasomal Pup-dependent pathway. Functionally, protein modifier that is covalently attached to lysine residues of substrate proteins, thereby targeting them for proteasomal degradation. The tagging system is termed pupylation. This is Prokaryotic ubiquitin-like protein Pup 2 from Saccharopolyspora erythraea (strain ATCC 11635 / DSM 40517 / JCM 4748 / NBRC 13426 / NCIMB 8594 / NRRL 2338).